Here is a 427-residue protein sequence, read N- to C-terminus: MAATDVERASNEEKRSLALSGHVGFDSLPDQLVGKSVTQGFCFNILCVGETGIGKSTLMNTLFNTTFETEEASHYENGVRLRPRTYELQESNVHLKLTIVDTVGFGDQINKDDSYRSVVDYIDTQFETYLQEELKIRRSLFNYHDSRIHVCLYFITPTGHSLKSLDLVAMKKLDSKVNIIPIIAKADTISKSELHKFKIKIMSELVSNGVQIYQFPTDDDAVAEINSVMNAHLPFAVVGSTEEVKVGNKLVRARQYPWGVVQVENESHCDFVKLREMLIRVNMEDLREQTHTRHYELYRRCKLEEMGFKDNDPDTQPFSLQETYEAKRKEFLSELQKKEEEMRQMFVNKVKETESELKERERELQEKFMQLKRIHQEESKKVEDKRRDLEEEMNAFNRRKVAMETLQSQSFQATSQQPLKKDKDRKN.

Residues 39-305 (QGFCFNILCV…ELYRRCKLEE (267 aa)) enclose the Septin-type G domain. The segment at 49–56 (GETGIGKS) is G1 motif. GTP-binding positions include 49–56 (GETGIGKS), glycine 104, 185–193 (KADTISKSE), glycine 239, and arginine 254. The segment at 101–104 (DTVG) is G3 motif. Residues 184–187 (AKAD) form a G4 motif region. Residues 320–407 (LQETYEAKRK…RRKVAMETLQ (88 aa)) adopt a coiled-coil conformation. A compositionally biased stretch (polar residues) spans 406 to 418 (LQSQSFQATSQQP). The tract at residues 406-427 (LQSQSFQATSQQPLKKDKDRKN) is disordered.

It belongs to the TRAFAC class TrmE-Era-EngA-EngB-Septin-like GTPase superfamily. Septin GTPase family.

The sequence is that of Septin-8-B (sept8-b) from Xenopus laevis (African clawed frog).